A 676-amino-acid chain; its full sequence is Long-chain-fatty-acid--CoA ligase 1 (676 aa).

Residue 246 to 257 participates in ATP binding; that stretch reads YTSGSTGLPKGV. The FACS motif lies at 511–560; that stretch reads DGWFRTGDVGELTPEGLLRIIDRKKNLVKTQNGEYIALEKLESRYRTSSL.

It belongs to the ATP-dependent AMP-binding enzyme family. It depends on Mg(2+) as a cofactor.

The catalysed reaction is a long-chain fatty acid + ATP + CoA = a long-chain fatty acyl-CoA + AMP + diphosphate. Esterification, concomitant with transport, of exogenous long-chain fatty acids into metabolically active CoA thioesters for subsequent degradation or incorporation into phospholipids. It may supplement intracellular myristoyl-CoA pools from exogenous myristate. Preferentially acts on C12:0-C16:0 fatty acids with myristic and pentadecanic acid (C15:0) having the highest activities. Appears to play a role in the maintenance of cell viability during stationary phase. This Schizosaccharomyces pombe (strain 972 / ATCC 24843) (Fission yeast) protein is Long-chain-fatty-acid--CoA ligase 1 (lcf1).